Reading from the N-terminus, the 367-residue chain is Trans-enoyl reductase ffsC (367 aa).

55-58 (CDWK) is a binding site for NADP(+). 143–150 (TGIGTLGL) lines the substrate pocket. NADP(+) contacts are provided by residues 203–206 (SAKN), tyrosine 221, and 268–269 (LE). 288–292 (GMAIL) serves as a coordination point for substrate. 357–358 (VS) contacts NADP(+).

The protein belongs to the zinc-containing alcohol dehydrogenase family. As to quaternary structure, monomer.

It participates in mycotoxin biosynthesis. Trans-enoyl reductase; part of the gene cluster that mediates the biosynthesis of the cytotoxic leucine-containing cytochalasans, including aspochalasin C, aspochalasin E, TMC-169, flavichalasine F, aspergillin PZ, aspochalasin M and flavichalasine G. The first step in the pathway is catalyzed by the hybrid PKS-NRPS ffsA that utilizes 8 units of malonyl-CoA to iteratively assemble the octaketide chain before addition of L-leucine by the C-terminal NRPS modules. Because ffsA lacks a designated enoylreductase (ER) domain, the required activity is provided the enoyl reductase fssC. The methyltransferase (MT) domain of ffsA catalyzes the alpha-methylation at C10 and C14 using S-adenosyl-L-methionine as the methyl-donating cosubstrate. Reduction by the hydrolyase ffsE, followed by dehydration and intra-molecular Diels-Alder cyclization by the Diels-Alderase ffsF then yield the required isoindolone-fused macrocycle. A number of oxidative steps catalyzed by the tailoring cytochrome P450 monooxygenase ffsD, the FAD-linked oxidoreductase ffsJ and the short-chain dehydrogenase/reductase ffsI, are further required to afford the final products. This is Trans-enoyl reductase ffsC from Aspergillus flavipes.